Reading from the N-terminus, the 316-residue chain is Beta-lactamase 3 (316 aa).

Positions 1–29 are cleaved as a signal peptide; the sequence is MFVLNKFFTNSHYKKIVPVVLLSCATLIG. The N-palmitoyl cysteine moiety is linked to residue C30. The S-diacylglycerol cysteine moiety is linked to residue C30. Residues 34–53 are disordered; that stretch reads NTQSESNKQTNQTNQVKQEN. The segment covering 40-50 has biased composition (low complexity); it reads NKQTNQTNQVK. S95 functions as the Acyl-ester intermediate in the catalytic mechanism. The active-site Proton acceptor is E191. 257–259 contributes to the substrate binding site; sequence KTG.

This sequence belongs to the class-A beta-lactamase family.

Its subcellular location is the cell membrane. It catalyses the reaction a beta-lactam + H2O = a substituted beta-amino acid. This Bacillus cereus protein is Beta-lactamase 3 (blaZ).